A 371-amino-acid chain; its full sequence is MSKIVIGLSGGVDSSVAAYLLKQQGHEVIGLFMRNWDSLVNSDILGNSSLNQSLCPQEQDFQDASRVAKQIGIPIYRVDFIKEYWDSVFENLIEQYQNGFTPNPDILCNKYIKFDKFFNYAIEKFGADYVAMGHYAIAKEGNLYRGIDQSKDQSYFLTQVRSQVLEKVIFPLGNMEKSEVRRIAQEANLYTANKKDSTGICFIGERKFTDFLQNYIPTQPGTIVDITTKKIVGNHIGAMYYTLGQRKGLNLGGMKEPYFVVGHDLEKKQVFVAPASEKKWLTSNWLFAQNLNLNNHDFNPENLSAKFRYRQKDVRVKVEFLENDQIKVYYPEGFEAVTPGQQIALYDGQKCLGGAVIKNIYWNENELNYSV.

Residues 7-14 (GLSGGVDS) and methionine 33 each bind ATP. The interval 103 to 105 (NPD) is interaction with target base in tRNA. Cysteine 108 functions as the Nucleophile in the catalytic mechanism. A disulfide bond links cysteine 108 and cysteine 201. Glycine 133 lines the ATP pocket. The segment at 151-153 (KDQ) is interaction with tRNA. Residue cysteine 201 is the Cysteine persulfide intermediate of the active site. An interaction with tRNA region spans residues 308–309 (RY).

It belongs to the MnmA/TRMU family.

The protein localises to the cytoplasm. It carries out the reaction S-sulfanyl-L-cysteinyl-[protein] + uridine(34) in tRNA + AH2 + ATP = 2-thiouridine(34) in tRNA + L-cysteinyl-[protein] + A + AMP + diphosphate + H(+). Its function is as follows. Catalyzes the 2-thiolation of uridine at the wobble position (U34) of tRNA, leading to the formation of s(2)U34. The chain is tRNA-specific 2-thiouridylase MnmA from Mycoplasmopsis pulmonis (strain UAB CTIP) (Mycoplasma pulmonis).